Reading from the N-terminus, the 206-residue chain is Probable thymidylate kinase (206 aa).

7 to 14 (GIDGSGKS) is an ATP binding site.

The protein belongs to the thymidylate kinase family.

It catalyses the reaction dTMP + ATP = dTDP + ADP. The polypeptide is Probable thymidylate kinase (Methanospirillum hungatei JF-1 (strain ATCC 27890 / DSM 864 / NBRC 100397 / JF-1)).